The following is a 93-amino-acid chain: Alpha-defensin 15 (93 aa).

A signal peptide spans 1-19 (MKTLVLLSALVLLAFQVQA). Residues 20–58 (DPIQNTDEETKTEEQPGEDDQAVSVSFGDPEGSSLQEES) constitute a propeptide that is removed on maturation. Positions 23–56 (QNTDEETKTEEQPGEDDQAVSVSFGDPEGSSLQE) are disordered. 3 cysteine pairs are disulfide-bonded: cysteine 64–cysteine 92, cysteine 66–cysteine 81, and cysteine 71–cysteine 91.

The protein belongs to the alpha-defensin family. In terms of tissue distribution, paneth cells of the small bowel.

The protein localises to the secreted. Its function is as follows. Probably contributes to the antimicrobial barrier function of the small bowel mucosa. In Mus musculus (Mouse), this protein is Alpha-defensin 15 (Defa15).